The following is a 152-amino-acid chain: MSKATGFIKEFRDFAVKGNAIDLAVGVIIGAAFGKIVDSLVKDVVMPLVNFILGGSVDFSNKFLVLSMPDGYTGPMTYADLTKAGANVLAWGNFITIIINFVLLAFVIFWMVKAIYSARRKEEAAPEAPAAPPEDVTVLREIRDLLKDKQGS.

3 helical membrane passes run 21–41, 44–64, and 92–112; these read IDLA…DSLV, VVMP…NKFL, and GNFI…FWMV.

Belongs to the MscL family. Homopentamer.

The protein resides in the cell inner membrane. Functionally, channel that opens in response to stretch forces in the membrane lipid bilayer. May participate in the regulation of osmotic pressure changes within the cell. This Bordetella bronchiseptica (strain ATCC BAA-588 / NCTC 13252 / RB50) (Alcaligenes bronchisepticus) protein is Large-conductance mechanosensitive channel.